A 623-amino-acid polypeptide reads, in one-letter code: Membralin-like protein At1g60995 (623 aa).

Residues 24–44 form a helical membrane-spanning segment; it reads GFLEYTYLFVAITLFCILVVM. The interval 99 to 119 is disordered; it reads SLEVSKTDQESSTSEENTDDT. Transmembrane regions (helical) follow at residues 315–335, 363–383, 392–412, and 424–444; these read GVLMMSLFVFFTTTMSVSFTL, IFVHVIESLVFVPIMIGILFF, LLAFMVLVLVWLCELFTLISV, and FFLLYFLVFHIYFFSYAYGFS. Disordered regions lie at residues 506-567 and 602-623; these read NRTT…QAGA and EAQVFADTSPPQNPHHDPLSVD. Over residues 514–531 the composition is skewed to polar residues; the sequence is PSGPNHTTPNQNTETRSF.

Belongs to the membralin family.

It is found in the membrane. The polypeptide is Membralin-like protein At1g60995 (Arabidopsis thaliana (Mouse-ear cress)).